Consider the following 1374-residue polypeptide: DNA-directed RNA polymerase subunit beta (1374 aa).

This sequence belongs to the RNA polymerase beta chain family. The RNAP catalytic core consists of 2 alpha, 1 beta, 1 beta' and 1 omega subunit. When a sigma factor is associated with the core the holoenzyme is formed, which can initiate transcription.

It carries out the reaction RNA(n) + a ribonucleoside 5'-triphosphate = RNA(n+1) + diphosphate. DNA-dependent RNA polymerase catalyzes the transcription of DNA into RNA using the four ribonucleoside triphosphates as substrates. This Rhodopseudomonas palustris (strain BisB5) protein is DNA-directed RNA polymerase subunit beta.